The primary structure comprises 674 residues: Pannexin-2 (674 aa).

Topologically, residues 11 to 53 (MATALLAGEKLRELILPGSQDDKAGALAALLLQLKLELPFDRV) are cytoplasmic. A helical membrane pass occupies residues 54–74 (VTIGTVLVPILLVTLVFTKNF). Residues 75-125 (AEEPIYCYTPHNFTRDQALYARGYCWTELRDALPGVDASLWPSLFEHKFLP) are Extracellular-facing. Residue asparagine 86 is glycosylated (N-linked (GlcNAc...) asparagine). A helical membrane pass occupies residues 126 to 146 (YALLAFAAIMYVPALGWEFLA). Residues 147 to 230 (STRLTSELNF…NFLAKLYLAR (84 aa)) are Cytoplasmic-facing. A helical transmembrane segment spans residues 231–251 (HVLILLLSVVPISYLCTYYAT). Topologically, residues 252–295 (QKQNEFTCALGASPDGPVGSAGPTVRVSCKLPSVQLQRIIAGVD) are extracellular. A helical membrane pass occupies residues 296–316 (IVLLCFMNLIILVNLIHLFIF). Residues 317–674 (RKSNFIFDKL…PRTVVSTVEF (358 aa)) lie on the Cytoplasmic side of the membrane. A compositionally biased stretch (polar residues) spans 394–408 (TTPTVRDSGIQTVDP). Disordered stretches follow at residues 394–426 (TTPTVRDSGIQTVDPSINPAEPEGSAEPPVVKR) and 485–510 (AHHYKGSGGDTGPSSAPPAASEKKHT). 2 positions are modified to phosphoserine: serine 590 and serine 601.

The protein belongs to the pannexin family. As to quaternary structure, forms PANX1/PANX2-heteromeric intercellular channels on coexpression in paired Xenopus oocytes. Does not form homomeric channels. S-palmitoylated in neural stem and progenitor cells. In terms of processing, cleaved by CASP3 and CASP7 during apoptosis. Cleavage has no effect on it function. In terms of tissue distribution, expressed in the eye, thyroid, prostate, kidney and liver. Abundantly expressed in the CNS, including hippocampus, olfactory bulb, cortex, cerebellum. Not detected in the white matter.

It is found in the cell membrane. The protein resides in the golgi apparatus membrane. Its subcellular location is the endoplasmic reticulum membrane. Structural component of the gap junctions and the hemichannels. The sequence is that of Pannexin-2 (Panx2) from Rattus norvegicus (Rat).